Consider the following 330-residue polypeptide: GTPase Obg (330 aa).

One can recognise an Obg domain in the interval 1 to 159; sequence MHFIDEVKIY…MWIHLSLKLL (159 aa). Positions 160–327 constitute an OBG-type G domain; that stretch reads SDVGLVGFPN…IVKLALETIK (168 aa). Residues 166 to 173, 191 to 195, 212 to 215, 279 to 282, and 308 to 310 contribute to the GTP site; these read GFPNAGKS, FTTLV, DIPG, NKCD, and STY. Residues S173 and T193 each contribute to the Mg(2+) site.

It belongs to the TRAFAC class OBG-HflX-like GTPase superfamily. OBG GTPase family. Monomer. The cofactor is Mg(2+).

The protein localises to the cytoplasm. Its function is as follows. An essential GTPase which binds GTP, GDP and possibly (p)ppGpp with moderate affinity, with high nucleotide exchange rates and a fairly low GTP hydrolysis rate. Plays a role in control of the cell cycle, stress response, ribosome biogenesis and in those bacteria that undergo differentiation, in morphogenesis control. The protein is GTPase Obg of Rickettsia massiliae (strain Mtu5).